A 359-amino-acid polypeptide reads, in one-letter code: MILNSSTEDGIKRIQDDCPKAGRHNYIFVMIPTLYSIIFVVGIFGNSLVVIVIYFYMKLKTVASVFLLNLALADLCFLLTLPLWAVYTAMEYRWPFGNYLCKIASASVSFNLYASVFLLTCLSIDRYLAIVHPMKSRLRRTMLVAKVTCIIIWLLAGLASLPAIIHRNVFFIENTNITVCAFHYESQNSTLPIGLGLTKNILGFLFPFLIILTSYTLIWKALKKAYEIQKNKPRNDDIFKIIMAIVLFFFFSWIPHQIFTFLDVLIQLGIIRDCRIADIVDTAMPITICIAYFNNCLNPLFYGFLGKKFKRYFLQLLKYIPPKAKSHSNLSTKMSTLSYRPSDNVSSSTKKPAPCFEVE.

Residues 1–25 (MILNSSTEDGIKRIQDDCPKAGRHN) lie on the Extracellular side of the membrane. An N-linked (GlcNAc...) (complex) asparagine glycan is attached at Asn-4. 2 residues coordinate angiotensin II: Gln-15 and Asp-17. Intrachain disulfides connect Cys-18–Cys-274 and Cys-101–Cys-180. The helical transmembrane segment at 26 to 55 (YIFVMIPTLYSIIFVVGIFGNSLVVIVIYF) threads the bilayer. Over 56–61 (YMKLKT) the chain is Cytoplasmic. Residues 62 to 89 (VASVFLLNLALADLCFLLTLPLWAVYTA) traverse the membrane as a helical segment. Over 90 to 98 (MEYRWPFGN) the chain is Extracellular. A helical transmembrane segment spans residues 99–125 (YLCKIASASVSFNLYASVFLLTCLSID). Over 126–141 (RYLAIVHPMKSRLRRT) the chain is Cytoplasmic. Residues 142 to 165 (MLVAKVTCIIIWLLAGLASLPAII) form a helical membrane-spanning segment. Residues 166–190 (HRNVFFIENTNITVCAFHYESQNST) are Extracellular-facing. Arg-167 provides a ligand contact to angiotensin II. An N-linked (GlcNAc...) asparagine glycan is attached at Asn-176. Angiotensin II is bound by residues Phe-182, His-183, and Tyr-184. An N-linked (GlcNAc...) asparagine glycan is attached at Asn-188. Residues 191–216 (LPIGLGLTKNILGFLFPFLIILTSYT) form a helical membrane-spanning segment. Lys-199 contributes to the angiotensin II binding site. Over 217-239 (LIWKALKKAYEIQKNKPRNDDIF) the chain is Cytoplasmic. The helical transmembrane segment at 240 to 268 (KIIMAIVLFFFFSWIPHQIFTFLDVLIQL) threads the bilayer. Residues 269–278 (GIIRDCRIAD) lie on the Extracellular side of the membrane. Residues 279–304 (IVDTAMPITICIAYFNNCLNPLFYGF) traverse the membrane as a helical segment. Residues 305–359 (LGKKFKRYFLQLLKYIPPKAKSHSNLSTKMSTLSYRPSDNVSSSTKKPAPCFEVE) lie on the Cytoplasmic side of the membrane. A compositionally biased stretch (polar residues) spans 335-350 (STLSYRPSDNVSSSTK). Residues 335-359 (STLSYRPSDNVSSSTKKPAPCFEVE) form a disordered region. Cys-355 carries the S-palmitoyl cysteine lipid modification.

It belongs to the G-protein coupled receptor 1 family. Interacts with MAS1. Interacts with ARRB1. Interacts with FLNA (via filamin repeat 21); increases PKA-mediated phosphorylation of FLNA. Post-translationally, C-terminal Ser or Thr residues may be phosphorylated. Liver, lung, adrenal and adrenocortical adenomas.

It is found in the cell membrane. Strongly inhibited by anti-hypertensive drugs losartan, candesartan, valsartan, irbesartan, telmisartan, eprosartan, olmesartan and azilsartan, most of which share a common biphenyl-tetrazole scaffold. Functionally, receptor for angiotensin II, a vasoconstricting peptide, which acts as a key regulator of blood pressure and sodium retention by the kidney. The activated receptor in turn couples to G-alpha proteins G(q) (GNAQ, GNA11, GNA14 or GNA15) and thus activates phospholipase C and increases the cytosolic Ca(2+) concentrations, which in turn triggers cellular responses such as stimulation of protein kinase C. Its function is as follows. (Microbial infection) During SARS coronavirus-2/SARS-CoV-2 infection, it is able to recognize and internalize the complex formed by secreted ACE2 and SARS-CoV-2 spike protein through DNM2/dynamin 2-dependent endocytosis. This is Type-1 angiotensin II receptor from Homo sapiens (Human).